We begin with the raw amino-acid sequence, 182 residues long: MDERRLIRVSKYLSKHLRHQPERLGLTLEPGGWVGVEQLLAACAANNVAISLAELHEVVEQNNKQRFGFDPTGQKIRAHQGHSVTVDLGLVAQQPPIILYHGTAKHNLAIILRDGLRPMQRQHVHLSRDRATALQVGARHGQAVILIVQADELFQAGQAFFCSDNGVWLTTAIDPAYLALER.

The protein belongs to the KptA/TPT1 family.

In terms of biological role, removes the 2'-phosphate from RNA via an intermediate in which the phosphate is ADP-ribosylated by NAD followed by a presumed transesterification to release the RNA and generate ADP-ribose 1''-2''-cyclic phosphate (APPR&gt;P). May function as an ADP-ribosylase. This chain is Probable RNA 2'-phosphotransferase, found in Herpetosiphon aurantiacus (strain ATCC 23779 / DSM 785 / 114-95).